The chain runs to 485 residues: Glutamyl-tRNA(Gln) amidotransferase subunit A (485 aa).

Residues Lys-76 and Ser-151 each act as charge relay system in the active site. The Acyl-ester intermediate role is filled by Ser-175.

It belongs to the amidase family. GatA subfamily. Heterotrimer of A, B and C subunits.

It catalyses the reaction L-glutamyl-tRNA(Gln) + L-glutamine + ATP + H2O = L-glutaminyl-tRNA(Gln) + L-glutamate + ADP + phosphate + H(+). Functionally, allows the formation of correctly charged Gln-tRNA(Gln) through the transamidation of misacylated Glu-tRNA(Gln) in organisms which lack glutaminyl-tRNA synthetase. The reaction takes place in the presence of glutamine and ATP through an activated gamma-phospho-Glu-tRNA(Gln). The sequence is that of Glutamyl-tRNA(Gln) amidotransferase subunit A from Chlorobium luteolum (strain DSM 273 / BCRC 81028 / 2530) (Pelodictyon luteolum).